The primary structure comprises 90 residues: RNA-binding protein Hfq (90 aa).

In terms of domain architecture, Sm spans 9-68; the sequence is DPFLNALRRERVPVSIYLVNGIKLQGQVESFDQFVILLKNTVSQMVYKHAISTVVPARPF. Residues 71 to 90 are disordered; sequence TGHQNAQGGYGPQDDVPSGE.

It belongs to the Hfq family. As to quaternary structure, homohexamer.

RNA chaperone that binds small regulatory RNA (sRNAs) and mRNAs to facilitate mRNA translational regulation in response to envelope stress, environmental stress and changes in metabolite concentrations. Also binds with high specificity to tRNAs. This chain is RNA-binding protein Hfq, found in Shewanella putrefaciens (strain CN-32 / ATCC BAA-453).